The chain runs to 790 residues: Accumulates dyads protein 3 (790 aa).

Positions 8-122 (LNKPESLKEQ…NTLKSPNKFL (115 aa)) are disordered. A compositionally biased stretch (basic and acidic residues) spans 39 to 49 (PESKPFRERRS). 2 stretches are compositionally biased toward polar residues: residues 50–78 (QTWI…ISKL) and 89–108 (ESWA…TLEN). Coiled-coil stretches lie at residues 241 to 328 (ISKE…REEK), 361 to 430 (LVSE…RLND), 477 to 498 (KNLE…LEKN), and 540 to 658 (QQFR…LKKL).

As to quaternary structure, interacts directly with SSP1. Probable component of a SPB complex composed of ADY3, SSP1, DON1, MPC54, SPO21/MPC70, NUD1 and CNM67. In terms of processing, phosphorylated.

It is found in the prospore membrane. The protein localises to the cytoplasm. It localises to the cytoskeleton. The protein resides in the microtubule organizing center. Its subcellular location is the spindle pole body. Involved in the pathway that organizes the prospore membrane (PSM) during sporulation. Mediates the assembly of the DON1 ring structure at the leading edge of PSM during meiosis II. May constitute a physical link between SSP1-containing PSM precursors and the spindle pole body (SPB) and may facilitate the recruitment of other factors that are required to promote spore wall formation. The sequence is that of Accumulates dyads protein 3 (ADY3) from Saccharomyces cerevisiae (strain ATCC 204508 / S288c) (Baker's yeast).